The sequence spans 505 residues: Activin receptor type-1B (505 aa).

The first 23 residues, Met-1–Gly-23, serve as a signal peptide directing secretion. Residues Ser-24–Glu-126 lie on the Extracellular side of the membrane. Asn-43 carries an N-linked (GlcNAc...) asparagine glycan. Residues Leu-127–Ile-149 traverse the membrane as a helical segment. The Cytoplasmic portion of the chain corresponds to Asn-150–Ile-505. The GS domain maps to Lys-177–Thr-206. One can recognise a Protein kinase domain in the interval Ile-207–Leu-497. ATP contacts are provided by residues Ile-213–Val-221 and Lys-234. Asp-335 (proton acceptor) is an active-site residue. Residue Tyr-380 is modified to Phosphotyrosine.

It belongs to the protein kinase superfamily. TKL Ser/Thr protein kinase family. TGFB receptor subfamily. As to quaternary structure, forms an activin receptor complex with activin receptor type-2 (ACVR2A or ACVR2B). Part of a complex consisting of MAGI2/ARIP1, ACVR2A, ACVR1B and SMAD3. Interacts with SMAD2 and SMAD3. Interacts with SMAD7. Interacts with FKBP1A. Interacts with IGSF1. Interacts with CRIPTO. Interacts with TDP2. Interacts with TSC22D1/TSC-22. Post-translationally, autophosphorylated. Phosphorylated by activin receptor type-2 (ACVR2A or ACVR2B) in response to activin-binding at serine and threonine residues in the GS domain. Phosphorylation of ACVR1B by activin receptor type-2 regulates association with SMAD7. Ubiquitinated. Level of ubiquitination is regulated by the SMAD7-SMURF1 complex. In terms of processing, ubiquitinated.

The protein resides in the cell membrane. It carries out the reaction L-threonyl-[receptor-protein] + ATP = O-phospho-L-threonyl-[receptor-protein] + ADP + H(+). The catalysed reaction is L-seryl-[receptor-protein] + ATP = O-phospho-L-seryl-[receptor-protein] + ADP + H(+). Activin receptor type-2 (ACVR2A or ACVR2B) activates the type-1 receptor through phosphorylation of its regulatory GS domain. Functionally, transmembrane serine/threonine kinase activin type-1 receptor forming an activin receptor complex with activin receptor type-2 (ACVR2A or ACVR2B). Transduces the activin signal from the cell surface to the cytoplasm and is thus regulating a many physiological and pathological processes including neuronal differentiation and neuronal survival, hair follicle development and cycling, FSH production by the pituitary gland, wound healing, extracellular matrix production, immunosuppression and carcinogenesis. Activin is also thought to have a paracrine or autocrine role in follicular development in the ovary. Within the receptor complex, type-2 receptors (ACVR2A and/or ACVR2B) act as a primary activin receptors whereas the type-1 receptors like ACVR1B act as downstream transducers of activin signals. Activin binds to type-2 receptor at the plasma membrane and activates its serine-threonine kinase. The activated receptor type-2 then phosphorylates and activates the type-1 receptor such as ACVR1B. Once activated, the type-1 receptor binds and phosphorylates the SMAD proteins SMAD2 and SMAD3, on serine residues of the C-terminal tail. Soon after their association with the activin receptor and subsequent phosphorylation, SMAD2 and SMAD3 are released into the cytoplasm where they interact with the common partner SMAD4. This SMAD complex translocates into the nucleus where it mediates activin-induced transcription. Inhibitory SMAD7, which is recruited to ACVR1B through FKBP1A, can prevent the association of SMAD2 and SMAD3 with the activin receptor complex, thereby blocking the activin signal. Activin signal transduction is also antagonized by the binding to the receptor of inhibin-B via the IGSF1 inhibin coreceptor. ACVR1B also phosphorylates TDP2. The sequence is that of Activin receptor type-1B (Acvr1b) from Mus musculus (Mouse).